We begin with the raw amino-acid sequence, 180 residues long: Major urinary protein 17 (180 aa).

A signal peptide spans 1 to 18; it reads MKMLLLLCLGLTLVCVHA. Cysteine 82 and cysteine 175 are joined by a disulfide.

Belongs to the calycin superfamily. Lipocalin family. Because of their involvement in the coordination of social behavior, Mup proteins are thought to exhibit variable expression depending upon gender, age and status of the studied individuals. Expression may also be strain-specific: in strains C57BL/6J and 129S7, transcriptional support is lacking for Mup17.

It localises to the secreted. Its function is as follows. Major urinary proteins (Mups) bind pheromones, thus stabilize them and allow slow release into the air from urine marks. May protect pheromones from oxidation. May also act as pheromones themselves. In this context, they play a role in the regulation of social behaviors, such as aggression, mating, pup-suckling, territory establishment and dominance. In Mus musculus (Mouse), this protein is Major urinary protein 17 (Mup17).